Consider the following 148-residue polypeptide: F-box protein At3g55900 (148 aa).

Positions 9-59 constitute an F-box domain; the sequence is CRNLSELPQELLYKILGLLPTRNVVSTSLISHQRRSQFHWMERLKFRYPRL.

The polypeptide is F-box protein At3g55900 (Arabidopsis thaliana (Mouse-ear cress)).